The primary structure comprises 450 residues: Phosphoglucosamine mutase 2 (450 aa).

The active-site Phosphoserine intermediate is the S101. 4 residues coordinate Mg(2+): S101, D245, D247, and D249. S101 carries the post-translational modification Phosphoserine.

The protein belongs to the phosphohexose mutase family. Mg(2+) serves as cofactor. Post-translationally, activated by phosphorylation.

It catalyses the reaction alpha-D-glucosamine 1-phosphate = D-glucosamine 6-phosphate. Its function is as follows. Catalyzes the conversion of glucosamine-6-phosphate to glucosamine-1-phosphate. The polypeptide is Phosphoglucosamine mutase 2 (Shewanella sp. (strain MR-4)).